Reading from the N-terminus, the 429-residue chain is Zinc-regulated GTPase metalloprotein activator 1 (429 aa).

A psi-PxLVp motif motif is present at residues 15–22 (GELPCLVT). 78–85 (GYLGSGKS) contacts GTP. Zn(2+)-binding residues include C136, C138, and C139. The CXCC motif motif lies at 136-139 (CLCC). Residues 139–143 (CSLKN) and 244–247 (NKYD) each bind GTP. Positions 362–428 (RDWEVQRTKG…SIEELLRKTL (67 aa)) constitute a CobW C-terminal domain.

The protein belongs to the SIMIBI class G3E GTPase family. ZNG1 subfamily.

It carries out the reaction GTP + H2O = GDP + phosphate + H(+). In terms of biological role, zinc chaperone that directly transfers zinc cofactor to target metalloproteins, thereby activating them. Catalyzes zinc insertion into the active site of methionine aminopeptidase MAP1, which function to cleave the initiator methionine from polypeptides during or after protein translation. Mechanistically, the N-terminal psi-PxLVp motif binds to the C6H2-type zinc finger of inactive form of MAP1. After formation of the docked complex, zinc is transferred from the CXCC motif in the GTPase domain of ZNG1 to the zinc binding site in the peptidase domain of MAP1 in a process requiring GTP hydrolysis. GTP/GDP exchange is required for release of active MAP1. The protein is Zinc-regulated GTPase metalloprotein activator 1 of Saccharomyces cerevisiae (strain ATCC 204508 / S288c) (Baker's yeast).